The primary structure comprises 353 residues: UPF0283 membrane protein YcjF (353 aa).

The next 3 helical transmembrane spans lie at 70–90 (MVMG…VQWT), 100–120 (VALG…GSVV), and 213–233 (ESTL…FIAW).

The protein belongs to the UPF0283 family.

It is found in the cell inner membrane. This chain is UPF0283 membrane protein YcjF, found in Escherichia coli O7:K1 (strain IAI39 / ExPEC).